A 376-amino-acid polypeptide reads, in one-letter code: Glutamate 5-kinase (376 aa).

Lysine 17 contacts ATP. Substrate is bound by residues serine 56, aspartate 144, and asparagine 156. Residues 176-177 and 218-224 each bind ATP; these read TD and TGGMQSK. The PUA domain maps to 283–359; that stretch reads KGTLLLDAGA…QSREIASVLK (77 aa).

Belongs to the glutamate 5-kinase family.

The protein resides in the cytoplasm. The catalysed reaction is L-glutamate + ATP = L-glutamyl 5-phosphate + ADP. The protein operates within amino-acid biosynthesis; L-proline biosynthesis; L-glutamate 5-semialdehyde from L-glutamate: step 1/2. In terms of biological role, catalyzes the transfer of a phosphate group to glutamate to form L-glutamate 5-phosphate. This Desulfotalea psychrophila (strain LSv54 / DSM 12343) protein is Glutamate 5-kinase.